The primary structure comprises 132 residues: MTAIDKIQVLDSIEKELLLCLQSAGQALLELSKEKTSQKATETHTNQFLKSLNIVESKLSEQINYLTQVSTGQPHEGSGYAAAKVLQMAWHRIQHVKSRIKELEECKIKYVQATNRLQTQRTGPNPGSGGVM.

Belongs to the Mediator complex subunit 11 family. In terms of assembly, component of the Mediator complex.

The protein localises to the nucleus. Its function is as follows. Component of the Mediator complex, a coactivator involved in the regulated transcription of nearly all RNA polymerase II-dependent genes. Mediator functions as a bridge to convey information from gene-specific regulatory proteins to the basal RNA polymerase II transcription machinery. Mediator is recruited to promoters by direct interactions with regulatory proteins and serves as a scaffold for theQ9P086 assembly of a functional pre-initiation complex with RNA polymerase II and the general transcription factors. The polypeptide is Mediator of RNA polymerase II transcription subunit 11 (MED11) (Aedes aegypti (Yellowfever mosquito)).